The chain runs to 205 residues: Adenylyl-sulfate kinase (205 aa).

Residue 31–38 (GLSGAGKS) participates in ATP binding. S105 (phosphoserine intermediate) is an active-site residue.

Belongs to the APS kinase family.

It catalyses the reaction adenosine 5'-phosphosulfate + ATP = 3'-phosphoadenylyl sulfate + ADP + H(+). Its pathway is sulfur metabolism; hydrogen sulfide biosynthesis; sulfite from sulfate: step 2/3. Functionally, catalyzes the synthesis of activated sulfate. This chain is Adenylyl-sulfate kinase, found in Shewanella baltica (strain OS155 / ATCC BAA-1091).